A 216-amino-acid polypeptide reads, in one-letter code: Cytochrome c biogenesis ATP-binding export protein CcmA (216 aa).

An ABC transporter domain is found at 18 to 216; it reads LQVEGLAGRR…AHARTLEISA (199 aa). 50–57 contacts ATP; sequence GHNGSGKT.

The protein belongs to the ABC transporter superfamily. CcmA exporter (TC 3.A.1.107) family. As to quaternary structure, the complex is composed of two ATP-binding proteins (CcmA) and two transmembrane proteins (CcmB).

The protein localises to the cell inner membrane. It catalyses the reaction heme b(in) + ATP + H2O = heme b(out) + ADP + phosphate + H(+). Functionally, part of the ABC transporter complex CcmAB involved in the biogenesis of c-type cytochromes; once thought to export heme, this seems not to be the case, but its exact role is uncertain. Responsible for energy coupling to the transport system. In Nitrosococcus oceani (strain ATCC 19707 / BCRC 17464 / JCM 30415 / NCIMB 11848 / C-107), this protein is Cytochrome c biogenesis ATP-binding export protein CcmA.